A 590-amino-acid chain; its full sequence is MDRNSVIGFALIAAIMIVWLQFMKPEQKLGLEKAAASREAVQKTPAAALPAPSAAVAAAARADSLGSFAQASVGTEKTITVSNDLFTATLSSKGATLKSLVLKKHLDGNRKPFNLISASDKGALSMLFLSSDGKKIDTRDLYFRSLDAKTTETVTGKEKLSVSYVLDVDATRSIQITYTFTGDSYVVDYDLKLNGFGSSIAGNEYQLDWDGGLNYSEKDQVDESHNAIASAYLGGSVVKLDAKDAKKTWQDEESGKAQWVAVRNKYFVAAIMPQRTTDGIYLHGTKKDGSDFKNYVAALKMSFPAGQQSVDDHYRLYVGPLDYNTVKSLNADLEKIMDFGWDWLTRPFAEYLILPIFNWMNKYVTNYGLIIIIFAFLIKLVTWPLSLASTKSMKKMSALQPVMKELQEKYKDNPAKLQSELGRIYKEAGVNPLGGCLPTVIQMPLLFAMFYVFRSSIQLRQHGFLWVKDLSVPDSVYHFAFKLPLYGDHIAIMPILMAVTVFFQQKITPNAQSNEQTKIMMWLFPAMMLFFFNNMPAGLALYYLMFNIFSVAQQAYMNATITDEEKAAAAMQVAAATKPAQSAKKGGKKK.

The next 5 helical transmembrane spans lie at 5–25 (SVIGFALIAAIMIVWLQFMKP), 368–388 (GLIIIIFAFLIKLVTWPLSLA), 433–453 (LGGCLPTVIQMPLLFAMFYVF), 483–503 (LPLYGDHIAIMPILMAVTVFF), and 519–539 (IMMWLFPAMMLFFFNNMPAGL).

The protein belongs to the OXA1/ALB3/YidC family. Type 1 subfamily. As to quaternary structure, interacts with the Sec translocase complex via SecD. Specifically interacts with transmembrane segments of nascent integral membrane proteins during membrane integration.

The protein resides in the cell inner membrane. In terms of biological role, required for the insertion and/or proper folding and/or complex formation of integral membrane proteins into the membrane. Involved in integration of membrane proteins that insert both dependently and independently of the Sec translocase complex, as well as at least some lipoproteins. Aids folding of multispanning membrane proteins. The sequence is that of Membrane protein insertase YidC from Chlorobaculum tepidum (strain ATCC 49652 / DSM 12025 / NBRC 103806 / TLS) (Chlorobium tepidum).